We begin with the raw amino-acid sequence, 172 residues long: Achaete-scute homolog 4 (172 aa).

In terms of domain architecture, bHLH spans 72 to 124 (AFLRKRNERERQRVRCVNEGYARLRDHLPRELADKRLSKVETLRAAIDYIKHL). The disordered stretch occupies residues 144-172 (QRRAECNSDGESKASSAPSPSSEPEEGGS). A compositionally biased stretch (basic and acidic residues) spans 145 to 155 (RRAECNSDGES). Positions 156-165 (KASSAPSPSS) are enriched in low complexity.

Expressed in skin. 7-fold higher expression in fetal skin than in adult skin. Weak expression also detected in fetal lung, aorta and brain, and in adult stomach, kidney, ovary and breast.

Its subcellular location is the nucleus. Functionally, could be a transcriptional regulator involved in skin development. The polypeptide is Achaete-scute homolog 4 (ASCL4) (Homo sapiens (Human)).